The following is a 484-amino-acid chain: Sodium-dependent glucose transporter 1 (484 aa).

Ser-6 carries the phosphoserine modification. Helical transmembrane passes span 40–60 (WFTTVVLNAAFLGMGVSAAVL), 80–100 (EIFVGRALGYLGGSVVGGVLF), 106–126 (FLLLGLSHLLTAAGLYLTPFC), 135–155 (MMSITGVSFGVLDTGGNVLIL), 168–188 (ALHFSFALGAFLAPLLAKLAW), 227–247 (LLWAYASIGTYVLVLSVFLFA), 274–294 (ALLCLLFLFFFFYVGAEVTYG), 317–337 (SIFWGTFAACRGLAIFFATLL), 340–360 (GTMMVLCNIGSLASSFFLVLF), 366–386 (CLWIASSVYGASMAATFPSGI), 401–421 (AFILVGAALGLMATPALSGIL), and 428–448 (LPVILYMCLGSAVLTTVLFPV).

The protein belongs to the major facilitator superfamily. In terms of tissue distribution, expressed in brain, liver, lung, and kidney. In kidney expressed in cortex and inner medulla, in ascending thin limbs (ATLs) and lower descending thin limbs (DTLs). Primarily expressed in the proximal tubules of the kidney.

It localises to the apical cell membrane. May function as a sodium-dependent glucose transporter. Potential channels for urea in the inner medulla of kidney. The sequence is that of Sodium-dependent glucose transporter 1 from Rattus norvegicus (Rat).